A 211-amino-acid chain; its full sequence is Ribonuclease HII (211 aa).

The RNase H type-2 domain maps to Met2–Val211. Residues Asp8, Glu9, and Asp106 each contribute to the a divalent metal cation site.

It belongs to the RNase HII family. The cofactor is Mn(2+). It depends on Mg(2+) as a cofactor.

Its subcellular location is the cytoplasm. The catalysed reaction is Endonucleolytic cleavage to 5'-phosphomonoester.. Endonuclease that specifically degrades the RNA of RNA-DNA hybrids. In Methanothrix thermoacetophila (strain DSM 6194 / JCM 14653 / NBRC 101360 / PT) (Methanosaeta thermophila), this protein is Ribonuclease HII.